The sequence spans 88 residues: Small ribosomal subunit protein bS20 (88 aa).

It belongs to the bacterial ribosomal protein bS20 family.

In terms of biological role, binds directly to 16S ribosomal RNA. The polypeptide is Small ribosomal subunit protein bS20 (Heliobacterium modesticaldum (strain ATCC 51547 / Ice1)).